A 227-amino-acid polypeptide reads, in one-letter code: Cytochrome c oxidase subunit 2 (227 aa).

The Mitochondrial intermembrane segment spans residues 1–14; sequence MPYPLQLGFQDATS. The chain crosses the membrane as a helical span at residues 15-45; it reads PIMEELLHFHDHTLMIVFLISSLVLYIITLM. Residues 46–59 lie on the Mitochondrial matrix side of the membrane; the sequence is LTTKLTHTSTMDAQ. Residues 60-87 form a helical membrane-spanning segment; that stretch reads EVETVWTILPAVILILIALPSLRILYMM. Residues 88–227 are Mitochondrial intermembrane-facing; it reads DEINNPLLTI…HFEDWSTSML (140 aa). Residues histidine 161, cysteine 196, glutamate 198, cysteine 200, histidine 204, and methionine 207 each contribute to the Cu cation site. Residue glutamate 198 coordinates Mg(2+).

This sequence belongs to the cytochrome c oxidase subunit 2 family. As to quaternary structure, component of the cytochrome c oxidase (complex IV, CIV), a multisubunit enzyme composed of 14 subunits. The complex is composed of a catalytic core of 3 subunits MT-CO1, MT-CO2 and MT-CO3, encoded in the mitochondrial DNA, and 11 supernumerary subunits COX4I, COX5A, COX5B, COX6A, COX6B, COX6C, COX7A, COX7B, COX7C, COX8 and NDUFA4, which are encoded in the nuclear genome. The complex exists as a monomer or a dimer and forms supercomplexes (SCs) in the inner mitochondrial membrane with NADH-ubiquinone oxidoreductase (complex I, CI) and ubiquinol-cytochrome c oxidoreductase (cytochrome b-c1 complex, complex III, CIII), resulting in different assemblies (supercomplex SCI(1)III(2)IV(1) and megacomplex MCI(2)III(2)IV(2)). Found in a complex with TMEM177, COA6, COX18, COX20, SCO1 and SCO2. Interacts with TMEM177 in a COX20-dependent manner. Interacts with COX20. Interacts with COX16. Cu cation is required as a cofactor.

The protein resides in the mitochondrion inner membrane. The enzyme catalyses 4 Fe(II)-[cytochrome c] + O2 + 8 H(+)(in) = 4 Fe(III)-[cytochrome c] + 2 H2O + 4 H(+)(out). In terms of biological role, component of the cytochrome c oxidase, the last enzyme in the mitochondrial electron transport chain which drives oxidative phosphorylation. The respiratory chain contains 3 multisubunit complexes succinate dehydrogenase (complex II, CII), ubiquinol-cytochrome c oxidoreductase (cytochrome b-c1 complex, complex III, CIII) and cytochrome c oxidase (complex IV, CIV), that cooperate to transfer electrons derived from NADH and succinate to molecular oxygen, creating an electrochemical gradient over the inner membrane that drives transmembrane transport and the ATP synthase. Cytochrome c oxidase is the component of the respiratory chain that catalyzes the reduction of oxygen to water. Electrons originating from reduced cytochrome c in the intermembrane space (IMS) are transferred via the dinuclear copper A center (CU(A)) of subunit 2 and heme A of subunit 1 to the active site in subunit 1, a binuclear center (BNC) formed by heme A3 and copper B (CU(B)). The BNC reduces molecular oxygen to 2 water molecules using 4 electrons from cytochrome c in the IMS and 4 protons from the mitochondrial matrix. This chain is Cytochrome c oxidase subunit 2 (MT-CO2), found in Dasypus novemcinctus (Nine-banded armadillo).